A 965-amino-acid chain; its full sequence is Kinesin-like protein KIN-7K, chloroplastic (965 aa).

Positions 1–69 (MASRQGSKSR…PQTAQRSKEN (69 aa)) are disordered. A compositionally biased stretch (low complexity) spans 19–28 (STASSTTSSS). Positions 29–38 (KLYQETSIDG) are enriched in polar residues. Residues 40–56 (SSPASSSAQSKQQFFSP) show a composition bias toward low complexity. One can recognise a Kinesin motor domain in the interval 69–388 (NVTVTVRFRP…LKFAHRAKHI (320 aa)). Residue 149–156 (GVTSSGKT) participates in ATP binding. Residues 389–483 (EIQAEQNKII…LTKLILVSTK (95 aa)) are a coiled coil. The span at 551 to 561 (LLNWLKPKKRD) shows a compositional bias: basic residues. Disordered stretches follow at residues 551–633 (LLNW…KMSD) and 842–888 (ATQK…ELRM). Residues 564–577 (SSASDQSSVVKSNS) are compositionally biased toward low complexity. Basic and acidic residues predominate over residues 606–623 (SEPREDREALEDSSHEME). 2 coiled-coil regions span residues 628 to 703 (SNKM…FVMT) and 738 to 846 (NRII…TQKS). Over residues 851–862 (RNKTGTTTNVRN) the composition is skewed to low complexity. A compositionally biased stretch (basic and acidic residues) spans 864–888 (GRRESLAKRQEHDSPSMELKRELRM). Positions 896 to 931 (YEAALGEKEQREAELERILEETKQREAYLENELANM) form a coiled coil. Residues 942-965 (QGADSEISDSISETRQTEQTEGSF) are disordered. Polar residues predominate over residues 949–965 (SDSISETRQTEQTEGSF).

Belongs to the TRAFAC class myosin-kinesin ATPase superfamily. Kinesin family. KIN-7 subfamily.

The protein localises to the plastid. It localises to the chloroplast. The chain is Kinesin-like protein KIN-7K, chloroplastic from Arabidopsis thaliana (Mouse-ear cress).